We begin with the raw amino-acid sequence, 517 residues long: Maturase K (517 aa).

Belongs to the intron maturase 2 family. MatK subfamily.

It localises to the plastid. The protein localises to the chloroplast. Usually encoded in the trnK tRNA gene intron. Probably assists in splicing its own and other chloroplast group II introns. This chain is Maturase K, found in Phalaenopsis japonica (Orchid).